Consider the following 406-residue polypeptide: Type IV pilus assembly protein PilC (406 aa).

The next 4 membrane-spanning stretches (helical) occupy residues 69-91, 171-191, 211-231, and 377-397; these read IFSR…LAIL, YPVI…TGIV, FLIA…LLAV, and MIIF…LPLF.

Belongs to the GSP F family. In terms of assembly, homotetramer. Interacts with PilB.

It localises to the cell inner membrane. In terms of biological role, essential inner membrane component of the type IV pilus (T4P) that plays a role in surface and host cell adhesion, colonization, biofilm maturation, virulence, and twitching, a form of surface-associated motility facilitated by cycles of extension, adhesion, and retraction of T4P fibers. Controls both pilus assembly and disassembly and plays an important role in PilB localization to the complex and ATPase activity. The protein is Type IV pilus assembly protein PilC of Thermus thermophilus (strain ATCC 27634 / DSM 579 / HB8).